We begin with the raw amino-acid sequence, 265 residues long: Methylthioribulose-1-phosphate dehydratase (265 aa).

C116 serves as a coordination point for substrate. The Zn(2+) site is built by H134 and H136. The active-site Proton donor/acceptor is the E159. H224 lines the Zn(2+) pocket.

It belongs to the aldolase class II family. MtnB subfamily. Zn(2+) serves as cofactor.

It is found in the cytoplasm. It carries out the reaction 5-(methylsulfanyl)-D-ribulose 1-phosphate = 5-methylsulfanyl-2,3-dioxopentyl phosphate + H2O. The protein operates within amino-acid biosynthesis; L-methionine biosynthesis via salvage pathway; L-methionine from S-methyl-5-thio-alpha-D-ribose 1-phosphate: step 2/6. Its function is as follows. Catalyzes the dehydration of methylthioribulose-1-phosphate (MTRu-1-P) into 2,3-diketo-5-methylthiopentyl-1-phosphate (DK-MTP-1-P). This chain is Methylthioribulose-1-phosphate dehydratase, found in Debaryomyces hansenii (strain ATCC 36239 / CBS 767 / BCRC 21394 / JCM 1990 / NBRC 0083 / IGC 2968) (Yeast).